We begin with the raw amino-acid sequence, 257 residues long: Snake venom serine protease rhinocerase 4 (257 aa).

The first 17 residues, 1 to 17, serve as a signal peptide directing secretion; it reads VLIRVLANLLVLQLSYA. Positions 18–23 are excised as a propeptide; the sequence is QKSSEL. Residues 24 to 248 enclose the Peptidase S1 domain; the sequence is VIGGAECNIN…YTDWIRSIIG (225 aa). 6 cysteine pairs are disulfide-bonded: cysteine 30–cysteine 162, cysteine 49–cysteine 65, cysteine 97–cysteine 255, cysteine 141–cysteine 209, cysteine 173–cysteine 188, and cysteine 199–cysteine 224. The N-linked (GlcNAc...) asparagine glycan is linked to asparagine 43. Histidine 64 serves as the catalytic Charge relay system. Residues asparagine 78 and asparagine 100 are each glycosylated (N-linked (GlcNAc...) asparagine). The Charge relay system role is filled by aspartate 109. Serine 203 serves as the catalytic Charge relay system. An N-linked (GlcNAc...) asparagine glycan is attached at asparagine 250.

Belongs to the peptidase S1 family. Snake venom subfamily. As to expression, expressed by the venom gland.

Its subcellular location is the secreted. In terms of biological role, snake venom serine protease that may act in the hemostasis system of the prey. This chain is Snake venom serine protease rhinocerase 4, found in Bitis rhinoceros (West African gaboon viper).